Reading from the N-terminus, the 263-residue chain is Endonuclease 8 (263 aa).

The Schiff-base intermediate with DNA role is filled by proline 2. Glutamate 3 acts as the Proton donor in catalysis. The active-site Proton donor; for beta-elimination activity is lysine 53. 3 residues coordinate DNA: glutamine 70, arginine 125, and asparagine 169. The FPG-type zinc finger occupies 229 to 263 (KVFHRDGEPCERCGGIIEKTTLSSRPFYWCPGCQH). The Proton donor; for delta-elimination activity role is filled by arginine 253.

Belongs to the FPG family. The cofactor is Zn(2+).

The enzyme catalyses 2'-deoxyribonucleotide-(2'-deoxyribose 5'-phosphate)-2'-deoxyribonucleotide-DNA = a 3'-end 2'-deoxyribonucleotide-(2,3-dehydro-2,3-deoxyribose 5'-phosphate)-DNA + a 5'-end 5'-phospho-2'-deoxyribonucleoside-DNA + H(+). In terms of biological role, involved in base excision repair of DNA damaged by oxidation or by mutagenic agents. Acts as a DNA glycosylase that recognizes and removes damaged bases. Has a preference for oxidized pyrimidines, such as thymine glycol, 5,6-dihydrouracil and 5,6-dihydrothymine. Has AP (apurinic/apyrimidinic) lyase activity and introduces nicks in the DNA strand. Cleaves the DNA backbone by beta-delta elimination to generate a single-strand break at the site of the removed base with both 3'- and 5'-phosphates. This chain is Endonuclease 8, found in Escherichia coli (strain UTI89 / UPEC).